The following is a 118-amino-acid chain: Small ribosomal subunit protein uS13 (118 aa).

Residues 94-118 are disordered; sequence GLPVRGQRTKTNARTRKGPRKPIKK.

Belongs to the universal ribosomal protein uS13 family. Part of the 30S ribosomal subunit. Forms a loose heterodimer with protein S19. Forms two bridges to the 50S subunit in the 70S ribosome.

Its function is as follows. Located at the top of the head of the 30S subunit, it contacts several helices of the 16S rRNA. In the 70S ribosome it contacts the 23S rRNA (bridge B1a) and protein L5 of the 50S subunit (bridge B1b), connecting the 2 subunits; these bridges are implicated in subunit movement. Contacts the tRNAs in the A and P-sites. This is Small ribosomal subunit protein uS13 from Salmonella paratyphi A (strain ATCC 9150 / SARB42).